Here is a 248-residue protein sequence, read N- to C-terminus: Gas vesicle protein J (248 aa).

The 1; truncated repeat unit spans residues 121–140 (DVKDDLYQTSAKIPSPVDTP). The 6 X 21 AA approximate tandem repeats stretch occupies residues 121–245 (DVKDDLYQTS…EEIPSSVDPA (125 aa)). 5 repeat units span residues 141–161 (IEVL…VNTS), 162–182 (MEIL…VGST), 183–203 (VEIL…VVST), 204–224 (VEIL…VGST), and 225–245 (VEIL…VDPA).

This sequence belongs to the gas vesicle GvpA family. Interacts with GvpA.

It is found in the gas vesicle. Its function is as follows. A minor component of the gas vesicle, might be involved in nucleating gas vesicle formation. Gas vesicles (GV) are hollow, gas filled proteinaceous nanostructures. During planktonic growth they allow positioning of the organism at a favorable depth for light or nutrient acquisition. This Dolichospermum flosaquae (Anabaena flos-aquae) protein is Gas vesicle protein J.